We begin with the raw amino-acid sequence, 419 residues long: Glutamyl-tRNA reductase (419 aa).

Residues 49 to 52 (TCNR), serine 107, 112 to 114 (EPQ), and glutamine 118 contribute to the substrate site. Residue cysteine 50 is the Nucleophile of the active site. Residue 187–192 (GAGETI) coordinates NADP(+).

The protein belongs to the glutamyl-tRNA reductase family. In terms of assembly, homodimer.

It catalyses the reaction (S)-4-amino-5-oxopentanoate + tRNA(Glu) + NADP(+) = L-glutamyl-tRNA(Glu) + NADPH + H(+). It participates in porphyrin-containing compound metabolism; protoporphyrin-IX biosynthesis; 5-aminolevulinate from L-glutamyl-tRNA(Glu): step 1/2. Catalyzes the NADPH-dependent reduction of glutamyl-tRNA(Glu) to glutamate 1-semialdehyde (GSA). This chain is Glutamyl-tRNA reductase, found in Vibrio vulnificus (strain CMCP6).